Consider the following 147-residue polypeptide: Ribonuclease H (147 aa).

The 142-residue stretch at Met-1–Ala-142 folds into the RNase H type-1 domain. Mg(2+) is bound by residues Asp-9, Glu-47, Asp-69, and Asp-134.

This sequence belongs to the RNase H family. In terms of assembly, monomer. Mg(2+) is required as a cofactor.

The protein resides in the cytoplasm. It catalyses the reaction Endonucleolytic cleavage to 5'-phosphomonoester.. Its function is as follows. Endonuclease that specifically degrades the RNA of RNA-DNA hybrids. In Symbiobacterium thermophilum (strain DSM 24528 / JCM 14929 / IAM 14863 / T), this protein is Ribonuclease H.